A 38-amino-acid polypeptide reads, in one-letter code: NAD-reducing hydrogenase HoxS subunit beta (38 aa).

Belongs to the [NiFe]/[NiFeSe] hydrogenase large subunit family. Tetramer of an alpha and a gamma subunits (flavin-containing dimer), and a delta and a nickel-containing beta subunits (hydrogenase dimer). Requires FMN as cofactor. The cofactor is Ni(2+).

The protein resides in the cytoplasm. It carries out the reaction H2 + NAD(+) = NADH + H(+). This Rhodococcus opacus (Nocardia opaca) protein is NAD-reducing hydrogenase HoxS subunit beta (hoxH).